Here is a 68-residue protein sequence, read N- to C-terminus: Large ribosomal subunit protein bL35 (68 aa).

The protein belongs to the bacterial ribosomal protein bL35 family.

This chain is Large ribosomal subunit protein bL35, found in Rickettsia conorii (strain ATCC VR-613 / Malish 7).